The chain runs to 489 residues: Putative ATP-dependent RNA helicase T26G10.1 (489 aa).

The short motif at 44–72 is the Q motif element; sequence KSFAELGVSQPLCDACQRLGWMKPSKIQQ. The Helicase ATP-binding domain maps to 75-246; it reads LPHALQGKDV…RASLRDPARV (172 aa). 88–95 serves as a coordination point for ATP; that stretch reads AETGSGKT. The DEAD box signature appears at 194–197; the sequence is DEAD. The 161-residue stretch at 257–417 folds into the Helicase C-terminal domain; sequence NLKQHYIFVP…EYKCVENEVM (161 aa). Positions 433 to 489 are disordered; sequence EMKEMDEKKKSGKKRRQNDDFGDTEESGGRFKMGIKSMGGRGGSGGGRGGKKKKMSK. Positions 469–480 are enriched in gly residues; the sequence is SMGGRGGSGGGR.

It belongs to the DEAD box helicase family. DDX47/RRP3 subfamily.

The protein localises to the nucleus. It carries out the reaction ATP + H2O = ADP + phosphate + H(+). In terms of biological role, probable ATP-dependent RNA helicase which may be involved in ribosome biogenesis. This is Putative ATP-dependent RNA helicase T26G10.1 from Caenorhabditis elegans.